We begin with the raw amino-acid sequence, 361 residues long: Chorismate synthase (361 aa).

Residue R48 participates in NADP(+) binding. Residues 125 to 127 (RSS), 238 to 239 (NA), G278, 293 to 297 (KPTSS), and R319 each bind FMN.

It belongs to the chorismate synthase family. In terms of assembly, homotetramer. FMNH2 is required as a cofactor.

The enzyme catalyses 5-O-(1-carboxyvinyl)-3-phosphoshikimate = chorismate + phosphate. It participates in metabolic intermediate biosynthesis; chorismate biosynthesis; chorismate from D-erythrose 4-phosphate and phosphoenolpyruvate: step 7/7. Functionally, catalyzes the anti-1,4-elimination of the C-3 phosphate and the C-6 proR hydrogen from 5-enolpyruvylshikimate-3-phosphate (EPSP) to yield chorismate, which is the branch point compound that serves as the starting substrate for the three terminal pathways of aromatic amino acid biosynthesis. This reaction introduces a second double bond into the aromatic ring system. In Aliivibrio fischeri (strain ATCC 700601 / ES114) (Vibrio fischeri), this protein is Chorismate synthase.